We begin with the raw amino-acid sequence, 797 residues long: Hid-1 family protein P27G11.12 (797 aa).

Belongs to the hid-1 family.

The protein resides in the cytoplasm. The protein localises to the nucleus. The chain is Hid-1 family protein P27G11.12 from Schizosaccharomyces pombe (strain 972 / ATCC 24843) (Fission yeast).